Consider the following 367-residue polypeptide: Glycolate oxidase 3 (367 aa).

Residues M1–D360 enclose the FMN hydroxy acid dehydrogenase domain. Residue Y25 coordinates glyoxylate. Residues P78–A80, S107, Q128–Y130, and T156 each bind FMN. A glyoxylate-binding site is contributed by Y130. Residue R165 participates in glyoxylate binding. Positions 231 and 253 each coordinate FMN. Glyoxylate-binding residues include H255 and R258. H255 (proton acceptor) is an active-site residue. FMN contacts are provided by residues D286–R290 and G309–R310. The Microbody targeting signal motif lies at S365–L367.

This sequence belongs to the FMN-dependent alpha-hydroxy acid dehydrogenase family. In terms of assembly, homotetramer. FMN serves as cofactor.

Its subcellular location is the peroxisome. The catalysed reaction is glycolate + O2 = glyoxylate + H2O2. It functions in the pathway photosynthesis; photorespiration; glycine from 2-phosphoglycolate: step 2/3. Functionally, catalyzes the oxidation of glycolate to glyoxylate, with a reduction of O2 to H2O2. Is a key enzyme in photorespiration in green plants. This Oryza sativa subsp. indica (Rice) protein is Glycolate oxidase 3 (GLO3).